A 556-amino-acid chain; its full sequence is Melanoma-associated antigen B4 (556 aa).

The segment covering 1–15 (MPRGQKSKARAREKR) has biased composition (basic residues). The tract at residues 1–110 (MPRGQKSKAR…RFSENPQNDL (110 aa)) is disordered. Over residues 39 to 73 (PSCSNQDSGDAVASTSTAGFPQKSKSQGEAPTTTA) the composition is skewed to polar residues. Over residues 77–87 (GACRRSRKSTR) the composition is skewed to basic residues. One can recognise an MAGE domain in the interval 111–310 (LTRKTGMLMQ…QAFPTHYEEA (200 aa)). The disordered stretch occupies residues 315–335 (EERAQAEAVGSPGTSAKDKAE). Residue S325 is modified to Phosphoserine. 15 consecutive repeat copies span residues 334-348 (AEAK…CKYQ), 349-363 (AESK…CKDQ), 364-378 (AESK…CKDN), 379-392 (AKSK…RKYK), 393-407 (AKSK…CKDQ), 408-421 (AESK…CKDQ), 422-436 (AESK…CKDQ), 437-451 (AESK…CKDQ), 452-466 (AESK…CKDK), 467-480 (AKSK…HKYK), 481-495 (AKSK…CKDQ), 496-510 (AESK…CKDQ), 511-525 (AESK…CKDN), 526-539 (AKSK…RKYK), and 540-554 (AKSK…GKDK). Residues 334–554 (AEAKVTLVDS…PLVDSSGKDK (221 aa)) are 15 X 15 AA approximate tandem repeats.

Expressed in testis (at protein level).

Its subcellular location is the cytoplasm. The chain is Melanoma-associated antigen B4 from Mus musculus (Mouse).